Reading from the N-terminus, the 282-residue chain is Acetyl-coenzyme A carboxylase carboxyl transferase subunit beta (282 aa).

A CoA carboxyltransferase N-terminal domain is found at 26 to 282 (GLWHQTPTGK…VSKTVKLLVH (257 aa)).

This sequence belongs to the AccD/PCCB family. In terms of assembly, acetyl-CoA carboxylase is a heterohexamer composed of biotin carboxyl carrier protein (AccB), biotin carboxylase (AccC) and two subunits each of ACCase subunit alpha (AccA) and ACCase subunit beta (AccD).

It localises to the cytoplasm. It carries out the reaction N(6)-carboxybiotinyl-L-lysyl-[protein] + acetyl-CoA = N(6)-biotinyl-L-lysyl-[protein] + malonyl-CoA. The protein operates within lipid metabolism; malonyl-CoA biosynthesis; malonyl-CoA from acetyl-CoA: step 1/1. Functionally, component of the acetyl coenzyme A carboxylase (ACC) complex. Biotin carboxylase (BC) catalyzes the carboxylation of biotin on its carrier protein (BCCP) and then the CO(2) group is transferred by the transcarboxylase to acetyl-CoA to form malonyl-CoA. The chain is Acetyl-coenzyme A carboxylase carboxyl transferase subunit beta from Flavobacteriaceae bacterium (strain 3519-10).